Reading from the N-terminus, the 491-residue chain is MAQKTLLIITDGIGYRKDSDHNAFFHAKKPTYDLMFKTLPYSLIDTHGLSVGLPKGQMGNSEVGHMCIGAGRVLYQDLVKISLSLQNDELKNNPAFLNTIQKSPVVHLMGLMSDGGVHSHIEHFIALALECEKSHKKVCLHLITDGRDVAPKSALTYLKQMQNICNESIQIATISGRFYAMDRDKRFERIELAYHSLMGLNHTPLSPSEYIQSQYDKNITDEFIMPACFKNYCGMQDDESFIFINFRNDRAREIVSALGQKQFSGFKRQVFKKLHIATMTPYDNTFPYPVLFPKESVQNTLAEVVSQHNLTQSHIAETEKYAHVTFFINGGVETPFKNENRVLIQSPKVTTYDLKPEMSAKEVTLAVLEQMKLGTDLIIVNFANGDMVGHTGNFEASVKAVEAVDACLGEILSLAKKLDYAMLLTSDHGNCERMKDENQNPLTNHTAGSVYCFVLGDGVKSIKNGALNNIASSVLKLMGLKAPATMDEPLF.

Mn(2+)-binding residues include aspartate 11 and serine 61. Serine 61 functions as the Phosphoserine intermediate in the catalytic mechanism. Residues histidine 118, 147–148 (RD), arginine 177, arginine 183, 247–250 (RNDR), and lysine 320 contribute to the substrate site. Mn(2+)-binding residues include aspartate 386, histidine 390, aspartate 427, histidine 428, and histidine 445.

The protein belongs to the BPG-independent phosphoglycerate mutase family. As to quaternary structure, monomer. The cofactor is Mn(2+).

It catalyses the reaction (2R)-2-phosphoglycerate = (2R)-3-phosphoglycerate. It participates in carbohydrate degradation; glycolysis; pyruvate from D-glyceraldehyde 3-phosphate: step 3/5. Its function is as follows. Catalyzes the interconversion of 2-phosphoglycerate and 3-phosphoglycerate. This is 2,3-bisphosphoglycerate-independent phosphoglycerate mutase from Helicobacter pylori (strain ATCC 700392 / 26695) (Campylobacter pylori).